Reading from the N-terminus, the 552-residue chain is 5'-AMP-activated protein kinase catalytic subunit alpha-2 (552 aa).

The Protein kinase domain maps to 16–268; that stretch reads YVLGDTLGVG…IKDIREHEWF (253 aa). ATP is bound by residues 22-30 and K45; that span reads LGVGTFGKV. The active-site Proton acceptor is the D139. T172 carries the post-translational modification Phosphothreonine; by LKB1 and CaMKK2. T258 carries the post-translational modification Phosphothreonine. Residues 291-376 form an AIS region; sequence EAVKEVCEKF…PERMPPLIAD (86 aa). S377 is subject to Phosphoserine. Positions 478 to 520 are disordered; it reads EQRSGSSTPQRSCSAAGLHRPRSSVDSSTAENHSLSGSLTGSL. The segment covering 480–490 has biased composition (polar residues); sequence RSGSSTPQRSC. Residue S491 is modified to Phosphoserine. Polar residues predominate over residues 501–510; it reads SVDSSTAENH. The segment covering 511 to 520 has biased composition (low complexity); the sequence is SLSGSLTGSL.

This sequence belongs to the protein kinase superfamily. CAMK Ser/Thr protein kinase family. SNF1 subfamily. AMPK is a heterotrimer of an alpha catalytic subunit (PRKAA1 or PRKAA2), a beta (PRKAB1 or PRKAB2) and a gamma non-catalytic subunits (PRKAG1, PRKAG2 or PRKAG3). Interacts with FNIP1 and FNIP2. Associates with internalized INSR complexes on Golgi/endosomal membranes; PRKAA2/AMPK2 together with ATIC and HACD3/PTPLAD1 is proposed to be part of a signaling network regulating INSR autophosphorylation and endocytosis. Interacts with DUSP29. Interacts with ARF6. The phosphorylated form at Thr-172 mediated by CamKK2 interacts with ACSS2. Mg(2+) is required as a cofactor. Ubiquitinated. Post-translationally, phosphorylated at Thr-172 by STK11/LKB1 in complex with STE20-related adapter-alpha (STRADA) pseudo kinase and CAB39. Also phosphorylated at Thr-172 by CAMKK2; triggered by a rise in intracellular calcium ions, without detectable changes in the AMP/ATP ratio. CAMKK1 can also phosphorylate Thr-172, but at much lower level. Dephosphorylated by protein phosphatase 2A and 2C (PP2A and PP2C). Phosphorylated by ULK1; leading to negatively regulate AMPK activity and suggesting the existence of a regulatory feedback loop between ULK1 and AMPK. Dephosphorylated by PPM1A and PPM1B at Thr-172 (mediated by STK11/LKB1). In terms of tissue distribution, skeletal muscle, lower levels in liver, heart and kidney.

Its subcellular location is the cytoplasm. It is found in the nucleus. The catalysed reaction is L-seryl-[protein] + ATP = O-phospho-L-seryl-[protein] + ADP + H(+). The enzyme catalyses L-threonyl-[protein] + ATP = O-phospho-L-threonyl-[protein] + ADP + H(+). It catalyses the reaction L-seryl-[acetyl-CoA carboxylase] + ATP = O-phospho-L-seryl-[acetyl-CoA carboxylase] + ADP + H(+). It carries out the reaction L-seryl-[3-hydroxy-3-methylglutaryl-coenzyme A reductase] + ATP = O-phospho-L-seryl-[3-hydroxy-3-methylglutaryl-coenzyme A reductase] + ADP + H(+). With respect to regulation, activated by phosphorylation on Thr-172. Binding of AMP to non-catalytic gamma subunit (PRKAG1, PRKAG2 or PRKAG3) results in allosteric activation, inducing phosphorylation on Thr-172. AMP-binding to gamma subunit also sustains activity by preventing dephosphorylation of Thr-172. ADP also stimulates Thr-172 phosphorylation, without stimulating already phosphorylated AMPK. ATP promotes dephosphorylation of Thr-172, rendering the enzyme inactive. Under physiological conditions AMPK mainly exists in its inactive form in complex with ATP, which is much more abundant than AMP. Selectively inhibited by compound C (6-[4-(2-Piperidin-1-yl-ethoxy)-phenyl)]-3-pyridin-4-yl-pyyrazolo[1,5-a] pyrimidine. Activated by resveratrol, a natural polyphenol present in red wine, and S17834, a synthetic polyphenol. Salicylate/aspirin directly activates kinase activity, primarily by inhibiting Thr-172 dephosphorylation. Catalytic subunit of AMP-activated protein kinase (AMPK), an energy sensor protein kinase that plays a key role in regulating cellular energy metabolism. In response to reduction of intracellular ATP levels, AMPK activates energy-producing pathways and inhibits energy-consuming processes: inhibits protein, carbohydrate and lipid biosynthesis, as well as cell growth and proliferation. AMPK acts via direct phosphorylation of metabolic enzymes, and by longer-term effects via phosphorylation of transcription regulators. Regulates lipid synthesis by phosphorylating and inactivating lipid metabolic enzymes such as ACACA, ACACB, GYS1, HMGCR and LIPE; regulates fatty acid and cholesterol synthesis by phosphorylating acetyl-CoA carboxylase (ACACA and ACACB) and hormone-sensitive lipase (LIPE) enzymes, respectively. Promotes lipolysis of lipid droplets by mediating phosphorylation of isoform 1 of CHKA (CHKalpha2). Regulates insulin-signaling and glycolysis by phosphorylating IRS1, PFKFB2 and PFKFB3. Involved in insulin receptor/INSR internalization. AMPK stimulates glucose uptake in muscle by increasing the translocation of the glucose transporter SLC2A4/GLUT4 to the plasma membrane, possibly by mediating phosphorylation of TBC1D4/AS160. Regulates transcription and chromatin structure by phosphorylating transcription regulators involved in energy metabolism such as CRTC2/TORC2, FOXO3, histone H2B, HDAC5, MEF2C, MLXIPL/ChREBP, EP300, HNF4A, p53/TP53, SREBF1, SREBF2 and PPARGC1A. Acts as a key regulator of glucose homeostasis in liver by phosphorylating CRTC2/TORC2, leading to CRTC2/TORC2 sequestration in the cytoplasm. In response to stress, phosphorylates 'Ser-36' of histone H2B (H2BS36ph), leading to promote transcription. Acts as a key regulator of cell growth and proliferation by phosphorylating FNIP1, TSC2, RPTOR, WDR24 and ATG1/ULK1: in response to nutrient limitation, negatively regulates the mTORC1 complex by phosphorylating RPTOR component of the mTORC1 complex and by phosphorylating and activating TSC2. Also phosphorylates and inhibits GATOR2 subunit WDR24 in response to nutrient limitation, leading to suppress glucose-mediated mTORC1 activation. In response to energetic stress, phosphorylates FNIP1, inactivating the non-canonical mTORC1 signaling, thereby promoting nuclear translocation of TFEB and TFE3, and inducing transcription of lysosomal or autophagy genes. In response to nutrient limitation, promotes autophagy by phosphorylating and activating ATG1/ULK1. In that process, it also activates WDR45/WIPI4. Phosphorylates CASP6, thereby preventing its autoprocessing and subsequent activation. AMPK also acts as a regulator of circadian rhythm by mediating phosphorylation of CRY1, leading to destabilize it. May regulate the Wnt signaling pathway by phosphorylating CTNNB1, leading to stabilize it. Also acts as a regulator of cellular polarity by remodeling the actin cytoskeleton; probably by indirectly activating myosin. Also phosphorylates CFTR, EEF2K, KLC1, NOS3 and SLC12A1. Plays an important role in the differential regulation of pro-autophagy (composed of PIK3C3, BECN1, PIK3R4 and UVRAG or ATG14) and non-autophagy (composed of PIK3C3, BECN1 and PIK3R4) complexes, in response to glucose starvation. Can inhibit the non-autophagy complex by phosphorylating PIK3C3 and can activate the pro-autophagy complex by phosphorylating BECN1. Upon glucose starvation, promotes ARF6 activation in a kinase-independent manner leading to cell migration. Upon glucose deprivation mediates the phosphorylation of ACSS2 at 'Ser-659', which exposes the nuclear localization signal of ACSS2, required for its interaction with KPNA1 and nuclear translocation. Upon stress, regulates mitochondrial fragmentation through phosphorylation of MTFR1L. This is 5'-AMP-activated protein kinase catalytic subunit alpha-2 (Prkaa2) from Rattus norvegicus (Rat).